A 208-amino-acid chain; its full sequence is MDYRNFFTGRPTSEICRDLIGRPFYYQAGGEKIGGYIVESEAYLGIYDRAAHSYGGRRSHANEGLWRAGGTIYIYSQRQYVFFDIACQEEGNPQGVLIRAIEPVWGLDQMLKNRGGKDGVLLTNGPAKLMQAMGIKSRNWDLAPLADSPFVIDLTEKKPAKEIVASPRIGIVQADPAWAQAPLRYYVAGNPYVSGMKKRDWADDHGWL.

The protein belongs to the DNA glycosylase MPG family.

The protein is Putative 3-methyladenine DNA glycosylase of Lactobacillus delbrueckii subsp. bulgaricus (strain ATCC 11842 / DSM 20081 / BCRC 10696 / JCM 1002 / NBRC 13953 / NCIMB 11778 / NCTC 12712 / WDCM 00102 / Lb 14).